We begin with the raw amino-acid sequence, 511 residues long: MDIISGQALFLLFCFISSCFLISTTARSRRSSGRAATLPPGPPRLPIIGNIHQVGKNPHSSFADLAKIYGPIMSLKFGCLNSVVITSPEAAREVLRTHDQILSGRKSNDSIRCFGHEEVSVIWLPPSSARWRMLRKLSVTLMFSPQRTEATKALRMKKVQELVSFMNESSERKEAVDISRASYTTVLNIISNILFSVDLGSYDSKKSNEFQDTVIGAMEAAGKPDAANYFPFMGFLDLQGNRKAMRGLTERLFRVFRGFMDAKIAEKSLGNYSKDVSNRDFLDSLLILNEGDEAELDNNDIEHLLLDMFTAGTDTSSSTLEWAMAELLRNPKTMVKAQAEMDRVLGQNSVVQESDISGLPYLQAVVKETFRLHPAAPLLVPRKAESDVEVLGFMVPKDTQVLVNVWAIGRDPSVWENPSQFEPERFMGKDIDVKGRDYELTPFGGGRRICPGLPLAVKTVSLMLASLLYSFDWKLPNGVVSEDLDMDETFGITLHRTNTLYAIPVKKQTIN.

The chain crosses the membrane as a helical span at residues 3 to 23 (IISGQALFLLFCFISSCFLIS). Position 450 (cysteine 450) interacts with heme.

It belongs to the cytochrome P450 family. Heme serves as cofactor.

The protein localises to the membrane. This chain is Cytochrome P450 76C4 (CYP76C4), found in Arabidopsis thaliana (Mouse-ear cress).